The primary structure comprises 339 residues: UDP-N-acetylenolpyruvoylglucosamine reductase (339 aa).

In terms of domain architecture, FAD-binding PCMH-type spans Val-19 to Glu-189. The active site involves Arg-166. Ser-239 functions as the Proton donor in the catalytic mechanism. The active site involves Glu-335.

It belongs to the MurB family. FAD serves as cofactor.

It localises to the cytoplasm. The enzyme catalyses UDP-N-acetyl-alpha-D-muramate + NADP(+) = UDP-N-acetyl-3-O-(1-carboxyvinyl)-alpha-D-glucosamine + NADPH + H(+). The protein operates within cell wall biogenesis; peptidoglycan biosynthesis. In terms of biological role, cell wall formation. This is UDP-N-acetylenolpyruvoylglucosamine reductase from Pseudomonas syringae pv. tomato (strain ATCC BAA-871 / DC3000).